Here is a 186-residue protein sequence, read N- to C-terminus: Ribosome-recycling factor (186 aa).

The protein belongs to the RRF family.

Its subcellular location is the cytoplasm. Responsible for the release of ribosomes from messenger RNA at the termination of protein biosynthesis. May increase the efficiency of translation by recycling ribosomes from one round of translation to another. The protein is Ribosome-recycling factor of Cytophaga hutchinsonii (strain ATCC 33406 / DSM 1761 / CIP 103989 / NBRC 15051 / NCIMB 9469 / D465).